A 764-amino-acid chain; its full sequence is MAGFRWFWDAMGGKNTRNQTKSKNIVAQAAKRGVQFASLSDADVVARAHECAQHSDDESRADLLALLSIGAQRSLSMNPFNVQLQAVLRILEGDVIHMATGEGKTLVGAMASVGYALQGKRVHSITVNDYLAERDAEWMGDLVRYFGLTVSAVTESLNTEQRRRAYASSIVYAPVTEIGFDVLRDQLVTQRSHAVQNGADVAIVDEADSVLIDEALVPLVLAGNEPGTAPAGRITEIVRRLKENEHYSVDADRRNVSLNDKGAALLEQVLGIQSLYDDAHIGTTLVQVNLALHAQALLIRDVHYIIRDGKIALIDASKGRVAQLQRWPDGVQAAVEAKEGLVVTEGGRILDTLTLQSLMGRYPIVCGMTGTAVEATDQLRQFYDLRVSVIEPHKQSQRFDEADRVYATQAEKFRALVKEIELLHTTGQPVLIGTSDVSESEELAQALQARDITVNVLNAKNDAEEAQIIAEAGDIGRVTVSTQMAGRGTDIRLGGANEKDRDAVVAKGGLAVIGSSRHRSSRLDNQLRGRAGRQGDPGLSLFFVSLEDDVVVVGGAGEEIKALPDADGRIDSKRITDFVAHCQRVTEGQLLEIHSQTWKYNKLLADQRVIIDERRARLLDTDQAWVELSEAVPEKAHKLSDKLDPAILVQAAREVMLYHLDRCWSDHLALMDHVRESIHLRTIARETPLDEYHRIAVREFKQLAQRAVDLAVETFRDVTIDQDGAHLADAGLTRPSATWTYMVSDNPLSNNNRSVINGIGSIFR.

ATP is bound by residues Q83, G101–T105, and D490.

Belongs to the SecA family. Monomer and homodimer. Part of the essential Sec protein translocation apparatus which comprises SecA, SecYEG and auxiliary proteins SecDF. Other proteins may also be involved.

Its subcellular location is the cell membrane. The protein resides in the cytoplasm. It catalyses the reaction ATP + H2O + cellular proteinSide 1 = ADP + phosphate + cellular proteinSide 2.. Its function is as follows. Part of the Sec protein translocase complex. Interacts with the SecYEG preprotein conducting channel. Has a central role in coupling the hydrolysis of ATP to the transfer of proteins into and across the cell membrane, serving as an ATP-driven molecular motor driving the stepwise translocation of polypeptide chains across the membrane. The sequence is that of Protein translocase subunit SecA 2 from Corynebacterium diphtheriae (strain ATCC 700971 / NCTC 13129 / Biotype gravis).